Consider the following 429-residue polypeptide: Serine hydroxymethyltransferase (429 aa).

Residues Leu126 and 130–132 (GHL) each bind (6S)-5,6,7,8-tetrahydrofolate. Position 235 is an N6-(pyridoxal phosphate)lysine (Lys235). Residue 359–361 (SPF) participates in (6S)-5,6,7,8-tetrahydrofolate binding.

It belongs to the SHMT family. As to quaternary structure, homodimer. Requires pyridoxal 5'-phosphate as cofactor.

The protein localises to the cytoplasm. It carries out the reaction (6R)-5,10-methylene-5,6,7,8-tetrahydrofolate + glycine + H2O = (6S)-5,6,7,8-tetrahydrofolate + L-serine. The protein operates within one-carbon metabolism; tetrahydrofolate interconversion. It participates in amino-acid biosynthesis; glycine biosynthesis; glycine from L-serine: step 1/1. Its function is as follows. Catalyzes the reversible interconversion of serine and glycine with tetrahydrofolate (THF) serving as the one-carbon carrier. This reaction serves as the major source of one-carbon groups required for the biosynthesis of purines, thymidylate, methionine, and other important biomolecules. Also exhibits THF-independent aldolase activity toward beta-hydroxyamino acids, producing glycine and aldehydes, via a retro-aldol mechanism. The polypeptide is Serine hydroxymethyltransferase (Synechococcus sp. (strain WH7803)).